Here is a 1061-residue protein sequence, read N- to C-terminus: NACHT, LRR and PYD domains-containing protein 12 (1061 aa).

Residues 1–95 (MLRTAGRDGL…WERGQREDLV (95 aa)) enclose the Pyrin domain. The region spanning 129–201 (YRDYVRRKFR…SPIKIETLFE (73 aa)) is the FISNA domain. Positions 211–528 (RTVVMQGAAG…EFFAAMYYIL (318 aa)) constitute an NACHT domain. Residue 217-224 (GAAGIGKS) participates in ATP binding. LRR repeat units follow at residues 828–848 (HLVELDLTGNALEDLGLRLLC), 857–878 (RLRTLWLKICRLTAAACDELAS), 885–906 (SLRELDLSLNELGDLGVLLLCE), 914–935 (KLQTLRLGICRLGSAACEGLSV), 942–962 (NLRELDLSFNDLGDWGLWLLA), 971–992 (RLQKLWLDSCGLTAKACENLYF), 999–1020 (TLTDLYLTNNALGDTGVRLLCK), and 1028–1049 (KLRVLWLFGMDLNKMTHSRLAA).

This sequence belongs to the NLRP family. Interacts (via pyrin domain) with ASC. Interacts (via pyrin domain) with FAF1 (via UBA domain). Interacts with MAP3K14; this interaction promotes proteasomal degradation of MAP3K14. Interacts with NOD2; this interaction promotes degradation of NOD2 through the ubiquitin-proteasome pathway. Interacts with HSPA1A and HSPA8. Interacts with HSP90AA1. Interacts with TRIM25; this interaction inhibits RIGI-mediated signaling pathway. As to expression, detected only in peripheral blood leukocytes, predominantly in eosinophils and granulocytes, and at lower levels in monocytes.

The protein localises to the cytoplasm. Its function is as follows. Plays an essential role as an potent mitigator of inflammation. Primarily expressed in dendritic cells and macrophages, inhibits both canonical and non-canonical NF-kappa-B and ERK activation pathways. Functions as a negative regulator of NOD2 by targeting it to degradation via the proteasome pathway. In turn, promotes bacterial tolerance. Also inhibits the RIGI-mediated immune signaling against RNA viruses by reducing the E3 ubiquitin ligase TRIM25-mediated 'Lys-63'-linked RIGI activation but enhancing the E3 ubiquitin ligase RNF125-mediated 'Lys-48'-linked RIGI degradation. Also acts as a negative regulator of inflammatory response to mitigate obesity and obesity-associated diseases in adipose tissue. The polypeptide is NACHT, LRR and PYD domains-containing protein 12 (NLRP12) (Homo sapiens (Human)).